We begin with the raw amino-acid sequence, 128 residues long: Thor profilin (128 aa).

This sequence belongs to the Asgard profilin family.

It is found in the cytoplasm. The protein localises to the cytoskeleton. Has no profilin activity against rabbit actin. The chain is Thor profilin from Thorarchaeota archaeon (strain AB_25).